A 596-amino-acid chain; its full sequence is Chloride intracellular channel protein 6 (596 aa).

Residues 1 to 360 (MAEATEPKEV…ALEEGDPGQE (360 aa)) form a disordered region. Residues 34–48 (LEGREASEEAAEAPR) are compositionally biased toward basic and acidic residues. At S40 the chain carries Phosphoserine. A compositionally biased stretch (gly residues) spans 65–74 (GCGQDEGTGG). Over residues 83 to 98 (GPEAETPGASGAPGEA) the composition is skewed to low complexity. Over residues 118–130 (SAQQVQGMSSGLD) the composition is skewed to polar residues. Over residues 148-160 (DPTASEAGEEAES) the composition is skewed to acidic residues. Low complexity-rich tracts occupy residues 197 to 213 (GSES…PQPQ) and 225 to 244 (GGNE…AGEG). Residues 246–290 (TLGKDGSEEAASEDARVDAHENGDQGKLQEETGEEEARPEPELKG) are compositionally biased toward basic and acidic residues. Residue S304 is modified to Phosphoserine. Over residues 338–348 (ELGRVNGRREN) the composition is skewed to basic and acidic residues. Positions 379 to 382 (CPFS) match the G-site motif. Residues 381–401 (FSQRLFMILWLKGVIFNVTTV) traverse the membrane as a helical segment. The region spanning 425–596 (DGEVKTDVNK…AYSDAAKRMK (172 aa)) is the GST C-terminal domain.

The protein belongs to the chloride channel CLIC family. Monomer (soluble state). Interacts with dopamine receptors DRD2, DRD3 and DRD4. In terms of processing, phosphorylated.

It localises to the cytoplasm. It is found in the cell membrane. It catalyses the reaction chloride(in) = chloride(out). With respect to regulation, channel activity is redox- and pH-regulated. Inhibited by IAA-94. In the soluble state, catalyzes glutaredoxin-like thiol disulfide exchange reactions with reduced glutathione as electron donor. Can insert into membranes and form voltage-dependent chloride-selective channels. The channel opens upon membrane depolarization at positive voltages and closes at negative membrane voltages. May play a critical role in water-secreting cells, possibly through the regulation of chloride ion transport. This chain is Chloride intracellular channel protein 6 (Clic6), found in Mus musculus (Mouse).